The sequence spans 85 residues: Small integral membrane protein 35 (85 aa).

Residues I7 to G27 traverse the membrane as a helical segment.

The protein localises to the membrane. The polypeptide is Small integral membrane protein 35 (Mus musculus (Mouse)).